The primary structure comprises 93 residues: MGLLDYFRGSRTDSAAVAKERLQILVAHERAERNKPDYLPLLQKELLEVIRKYVNVGQDAITVTMEKDDNREVLELNVVLPDAIESRPKRKRG.

This sequence belongs to the MinE family.

In terms of biological role, prevents the cell division inhibition by proteins MinC and MinD at internal division sites while permitting inhibition at polar sites. This ensures cell division at the proper site by restricting the formation of a division septum at the midpoint of the long axis of the cell. This Methylococcus capsulatus (strain ATCC 33009 / NCIMB 11132 / Bath) protein is Cell division topological specificity factor.